The following is a 121-amino-acid chain: Small ribosomal subunit protein uS13 (121 aa).

The interval 89 to 121 (MRHRRGLPVRGQNTKNNARTRKGKKVSIAGKKK) is disordered. Positions 106–121 (ARTRKGKKVSIAGKKK) are enriched in basic residues.

The protein belongs to the universal ribosomal protein uS13 family. As to quaternary structure, part of the 30S ribosomal subunit. Forms a loose heterodimer with protein S19. Forms two bridges to the 50S subunit in the 70S ribosome.

In terms of biological role, located at the top of the head of the 30S subunit, it contacts several helices of the 16S rRNA. In the 70S ribosome it contacts the 23S rRNA (bridge B1a) and protein L5 of the 50S subunit (bridge B1b), connecting the 2 subunits; these bridges are implicated in subunit movement. Contacts the tRNAs in the A and P-sites. The protein is Small ribosomal subunit protein uS13 of Latilactobacillus sakei subsp. sakei (strain 23K) (Lactobacillus sakei subsp. sakei).